The sequence spans 404 residues: 6-hydroxytryptophan 2,3-dioxygenase fscD (404 aa).

His-341 is a binding site for heme b.

Belongs to the indoleamine 2,3-dioxygenase family. It depends on heme as a cofactor.

It functions in the pathway secondary metabolite biosynthesis. 6-hydroxytryptophan 2,3-dioxygenase; part of the fragmented gene cluster that mediates the biosynthesis of fusarochromene, a tryptophan-derived metabolite closely related to a group of mycotoxins including fusarochromanone. Within the pathway, fscD is responsible of the cleavage of the pyrrole ring of 6-hydroxytryptophan. The first step of the pathway is the epimerization of L-tryptophan to D-tryptophan in the presence of the NRPS-like tryptophan epimerase fscC. D-tryptophan is subsequently hydroxylated by the tryptophan 6-hydroxylase fscE to yield 6-hydroxytryptophan. The pyrrole ring undergoes cleavaged by the tryptophan 2,3-dioxygenase fscD and is finally converted to 4-hydroxykyrunenine by the hydrolase fscH. The NRPS-like oxidoreductase fscA reduces the carboxyl group to primary alcohol and the DMATS-type prenyltransferase fscG performs prenylation, followed by the formation of a chromene ring catalyzed by the oxidoreductase fscI, which leads to desacetylfusarochromene. Epoxidation by fscF and rearrangement reactions of chromene double bonds convert compound desacetylfusarochromene to fusarochromanones. Although specific acetyltransferases were not found near the fsc gene cluster, several predicted enzymes containing the N-acetyltransferase superfamily domain are present in the genome of F.equiseti. These predicted enzymes may have the potential to convert desacetylfusarochromene to fusarochromene. This Fusarium equiseti (Fusarium scirpi) protein is 6-hydroxytryptophan 2,3-dioxygenase fscD.